Here is a 414-residue protein sequence, read N- to C-terminus: MANSC domain-containing protein 1 (414 aa).

The signal sequence occupies residues 1-24 (MLFRGTSLAYSLLVISFLTPRSSA). The Extracellular portion of the chain corresponds to 25–369 (GQNCLTKSLE…HGLSFEKWLL (345 aa)). The MANSC domain maps to 32 to 116 (SLEDVVIDIQ…LKPAKGLVTY (85 aa)). Residues Asn128, Asn234, and Asn335 are each glycosylated (N-linked (GlcNAc...) asparagine). The tract at residues 311 to 339 (FQGGSTLTSDPRHGKSSTSESSITNKTAS) is disordered. The span at 326–338 (SSTSESSITNKTA) shows a compositional bias: polar residues. A helical transmembrane segment spans residues 370-392 (IGTLLCGVLFLVIGLVLLGRMLV). Residues 393–414 (EALRRKRYSRLDYLINGIYVDI) are Cytoplasmic-facing.

Its subcellular location is the membrane. The chain is MANSC domain-containing protein 1 (Mansc1) from Mus musculus (Mouse).